The chain runs to 211 residues: MINLNLVLFGAPGAGKGTQAKFIVDKYGIPQISTGDILRVAVANKTKLGLEAKKFMDAGQLVPDEIVNGLVAERLAEKDCEKGFIMDGFPRNVAQAKVLDEILTKLGKQIEKVIALNVPDKDIIERITGRRTSKVTGKIYHIKFNPPVDEKPEDLVQRADDTEEVVVKRLETYHNQTAPVLDYYKVQNKVTEIDGTKKLEDITQDIFKILG.

13-18 provides a ligand contact to ATP; the sequence is GAGKGT. The NMP stretch occupies residues 33-62; that stretch reads STGDILRVAVANKTKLGLEAKKFMDAGQLV. AMP is bound by residues Thr34, Arg39, 60-62, 88-91, and Gln95; these read QLV and GFPR. The segment at 129–161 is LID; sequence GRRTSKVTGKIYHIKFNPPVDEKPEDLVQRADD. ATP is bound by residues Arg130 and 139-140; that span reads IY. AMP-binding residues include Arg158 and Arg169. Lys197 serves as a coordination point for ATP.

This sequence belongs to the adenylate kinase family. Monomer.

Its subcellular location is the cytoplasm. It carries out the reaction AMP + ATP = 2 ADP. It participates in purine metabolism; AMP biosynthesis via salvage pathway; AMP from ADP: step 1/1. In terms of biological role, catalyzes the reversible transfer of the terminal phosphate group between ATP and AMP. Plays an important role in cellular energy homeostasis and in adenine nucleotide metabolism. The polypeptide is Adenylate kinase (Fusobacterium nucleatum subsp. nucleatum (strain ATCC 25586 / DSM 15643 / BCRC 10681 / CIP 101130 / JCM 8532 / KCTC 2640 / LMG 13131 / VPI 4355)).